The sequence spans 136 residues: 6,7-dimethyl-8-ribityllumazine synthase (136 aa).

Residues Phe-11, 43-45, and 67-69 contribute to the 5-amino-6-(D-ribitylamino)uracil site; these read SFD and AVI. 72-73 is a (2S)-2-hydroxy-3-oxobutyl phosphate binding site; the sequence is ET. Catalysis depends on His-75, which acts as the Proton donor. Leu-100 serves as a coordination point for 5-amino-6-(D-ribitylamino)uracil. Arg-115 contributes to the (2S)-2-hydroxy-3-oxobutyl phosphate binding site.

The protein belongs to the DMRL synthase family.

The enzyme catalyses (2S)-2-hydroxy-3-oxobutyl phosphate + 5-amino-6-(D-ribitylamino)uracil = 6,7-dimethyl-8-(1-D-ribityl)lumazine + phosphate + 2 H2O + H(+). Its pathway is cofactor biosynthesis; riboflavin biosynthesis; riboflavin from 2-hydroxy-3-oxobutyl phosphate and 5-amino-6-(D-ribitylamino)uracil: step 1/2. In terms of biological role, catalyzes the formation of 6,7-dimethyl-8-ribityllumazine by condensation of 5-amino-6-(D-ribitylamino)uracil with 3,4-dihydroxy-2-butanone 4-phosphate. This is the penultimate step in the biosynthesis of riboflavin. This chain is 6,7-dimethyl-8-ribityllumazine synthase, found in Picrophilus torridus (strain ATCC 700027 / DSM 9790 / JCM 10055 / NBRC 100828 / KAW 2/3).